The sequence spans 690 residues: Elongation factor G (690 aa).

One can recognise a tr-type G domain in the interval 8 to 283 (EDYRNFGIMA…AVVDYLPSPV (276 aa)). GTP contacts are provided by residues 17-24 (AHIDAGKT), 81-85 (DTPGH), and 135-138 (NKMD).

Belongs to the TRAFAC class translation factor GTPase superfamily. Classic translation factor GTPase family. EF-G/EF-2 subfamily.

It localises to the cytoplasm. Its function is as follows. Catalyzes the GTP-dependent ribosomal translocation step during translation elongation. During this step, the ribosome changes from the pre-translocational (PRE) to the post-translocational (POST) state as the newly formed A-site-bound peptidyl-tRNA and P-site-bound deacylated tRNA move to the P and E sites, respectively. Catalyzes the coordinated movement of the two tRNA molecules, the mRNA and conformational changes in the ribosome. This chain is Elongation factor G, found in Rhodopseudomonas palustris (strain BisB5).